Consider the following 86-residue polypeptide: Exodeoxyribonuclease 7 small subunit (86 aa).

A disordered region spans residues 64–86 (SNPETVQDKTDTDEPDSNEFSLT).

This sequence belongs to the XseB family. Heterooligomer composed of large and small subunits.

The protein resides in the cytoplasm. The enzyme catalyses Exonucleolytic cleavage in either 5'- to 3'- or 3'- to 5'-direction to yield nucleoside 5'-phosphates.. Functionally, bidirectionally degrades single-stranded DNA into large acid-insoluble oligonucleotides, which are then degraded further into small acid-soluble oligonucleotides. The sequence is that of Exodeoxyribonuclease 7 small subunit from Akkermansia muciniphila (strain ATCC BAA-835 / DSM 22959 / JCM 33894 / BCRC 81048 / CCUG 64013 / CIP 107961 / Muc).